The sequence spans 256 residues: Ubiquinone biosynthesis O-methyltransferase (256 aa).

4 residues coordinate S-adenosyl-L-methionine: Arg44, Gly80, Asp101, and Met144.

This sequence belongs to the methyltransferase superfamily. UbiG/COQ3 family.

It catalyses the reaction a 3-demethylubiquinol + S-adenosyl-L-methionine = a ubiquinol + S-adenosyl-L-homocysteine + H(+). The catalysed reaction is a 3-(all-trans-polyprenyl)benzene-1,2-diol + S-adenosyl-L-methionine = a 2-methoxy-6-(all-trans-polyprenyl)phenol + S-adenosyl-L-homocysteine + H(+). The protein operates within cofactor biosynthesis; ubiquinone biosynthesis. Its function is as follows. O-methyltransferase that catalyzes the 2 O-methylation steps in the ubiquinone biosynthetic pathway. This chain is Ubiquinone biosynthesis O-methyltransferase, found in Methylocella silvestris (strain DSM 15510 / CIP 108128 / LMG 27833 / NCIMB 13906 / BL2).